A 468-amino-acid chain; its full sequence is Glutamate--tRNA ligase (468 aa).

Positions 10–20 (PSPTGDLHIGG) match the 'HIGH' region motif. 4 residues coordinate Zn(2+): C99, C101, C126, and D128. A 'KMSKS' region motif is present at residues 236-240 (RLSKR). K239 serves as a coordination point for ATP.

This sequence belongs to the class-I aminoacyl-tRNA synthetase family. Glutamate--tRNA ligase type 1 subfamily. In terms of assembly, monomer. It depends on Zn(2+) as a cofactor.

The protein resides in the cytoplasm. The enzyme catalyses tRNA(Glu) + L-glutamate + ATP = L-glutamyl-tRNA(Glu) + AMP + diphosphate. Functionally, catalyzes the attachment of glutamate to tRNA(Glu) in a two-step reaction: glutamate is first activated by ATP to form Glu-AMP and then transferred to the acceptor end of tRNA(Glu). This Syntrophobacter fumaroxidans (strain DSM 10017 / MPOB) protein is Glutamate--tRNA ligase.